Consider the following 283-residue polypeptide: Octanoyl-[GcvH]:protein N-octanoyltransferase (283 aa).

Residues 42–248 enclose the BPL/LPL catalytic domain; it reads GQSDAVVRTW…TLQSFGGELY (207 aa). Residue cysteine 147 is the Acyl-thioester intermediate of the active site.

This sequence belongs to the octanoyltransferase LipL family.

The enzyme catalyses N(6)-octanoyl-L-lysyl-[glycine-cleavage complex H protein] + L-lysyl-[lipoyl-carrier protein] = N(6)-octanoyl-L-lysyl-[lipoyl-carrier protein] + L-lysyl-[glycine-cleavage complex H protein]. It functions in the pathway protein modification; protein lipoylation via endogenous pathway; protein N(6)-(lipoyl)lysine from octanoyl-[acyl-carrier-protein]. In terms of biological role, catalyzes the amidotransfer (transamidation) of the octanoyl moiety from octanoyl-GcvH to the lipoyl domain of the E2 subunit of lipoate-dependent enzymes. This is Octanoyl-[GcvH]:protein N-octanoyltransferase from Geobacillus kaustophilus (strain HTA426).